The chain runs to 85 residues: ATP synthase subunit c (85 aa).

2 consecutive transmembrane segments (helical) span residues 10–30 (IAVGIIVGLASLGTAIGFALL) and 53–73 (FIIAGLLDAVPMIGIVIALLF).

This sequence belongs to the ATPase C chain family. F-type ATPases have 2 components, F(1) - the catalytic core - and F(0) - the membrane proton channel. F(1) has five subunits: alpha(3), beta(3), gamma(1), delta(1), epsilon(1). F(0) has three main subunits: a(1), b(2) and c(10-14). The alpha and beta chains form an alternating ring which encloses part of the gamma chain. F(1) is attached to F(0) by a central stalk formed by the gamma and epsilon chains, while a peripheral stalk is formed by the delta and b chains.

Its subcellular location is the cell inner membrane. Its function is as follows. F(1)F(0) ATP synthase produces ATP from ADP in the presence of a proton or sodium gradient. F-type ATPases consist of two structural domains, F(1) containing the extramembraneous catalytic core and F(0) containing the membrane proton channel, linked together by a central stalk and a peripheral stalk. During catalysis, ATP synthesis in the catalytic domain of F(1) is coupled via a rotary mechanism of the central stalk subunits to proton translocation. Functionally, key component of the F(0) channel; it plays a direct role in translocation across the membrane. A homomeric c-ring of between 10-14 subunits forms the central stalk rotor element with the F(1) delta and epsilon subunits. The polypeptide is ATP synthase subunit c (Aliivibrio fischeri (strain ATCC 700601 / ES114) (Vibrio fischeri)).